A 373-amino-acid polypeptide reads, in one-letter code: Flagellar P-ring protein (373 aa).

An N-terminal signal peptide occupies residues 1-28; that stretch reads MPRVSTHLVKLAAAALCALLLSAVAASA.

The protein belongs to the FlgI family. In terms of assembly, the basal body constitutes a major portion of the flagellar organelle and consists of four rings (L,P,S, and M) mounted on a central rod.

Its subcellular location is the periplasm. The protein resides in the bacterial flagellum basal body. Assembles around the rod to form the L-ring and probably protects the motor/basal body from shearing forces during rotation. The sequence is that of Flagellar P-ring protein from Rhodopseudomonas palustris (strain ATCC BAA-98 / CGA009).